A 607-amino-acid polypeptide reads, in one-letter code: Elongation factor 4 (607 aa).

The region spanning 6–188 (DRIRNFSIIA…AIVARIPAPK (183 aa)) is the tr-type G domain. Residues 18-23 (DHGKST) and 135-138 (NKID) each bind GTP.

Belongs to the TRAFAC class translation factor GTPase superfamily. Classic translation factor GTPase family. LepA subfamily.

The protein resides in the cell inner membrane. The enzyme catalyses GTP + H2O = GDP + phosphate + H(+). Its function is as follows. Required for accurate and efficient protein synthesis under certain stress conditions. May act as a fidelity factor of the translation reaction, by catalyzing a one-codon backward translocation of tRNAs on improperly translocated ribosomes. Back-translocation proceeds from a post-translocation (POST) complex to a pre-translocation (PRE) complex, thus giving elongation factor G a second chance to translocate the tRNAs correctly. Binds to ribosomes in a GTP-dependent manner. This Rhizorhabdus wittichii (strain DSM 6014 / CCUG 31198 / JCM 15750 / NBRC 105917 / EY 4224 / RW1) (Sphingomonas wittichii) protein is Elongation factor 4.